Reading from the N-terminus, the 197-residue chain is Thymidylate kinase (197 aa).

Residue 7-14 participates in ATP binding; that stretch reads GIDGSGKS.

This sequence belongs to the thymidylate kinase family.

The catalysed reaction is dTMP + ATP = dTDP + ADP. Phosphorylation of dTMP to form dTDP in both de novo and salvage pathways of dTTP synthesis. In Thermotoga sp. (strain RQ2), this protein is Thymidylate kinase.